The following is a 640-amino-acid chain: Threonine--tRNA ligase (640 aa).

In terms of domain architecture, TGS spans 1–59; sequence MKIKVKLPDGKEKEYDRGITPAEIAKELGVKKAIGAVVNGELWDLKRPIENDCELRLVT. Residues 240–531 are catalytic; sequence DHRKLGPHLE…LIEHFAGAFP (292 aa). The Zn(2+) site is built by Cys332, His383, and His508.

This sequence belongs to the class-II aminoacyl-tRNA synthetase family. In terms of assembly, homodimer. Requires Zn(2+) as cofactor.

The protein localises to the cytoplasm. The catalysed reaction is tRNA(Thr) + L-threonine + ATP = L-threonyl-tRNA(Thr) + AMP + diphosphate + H(+). In terms of biological role, catalyzes the attachment of threonine to tRNA(Thr) in a two-step reaction: L-threonine is first activated by ATP to form Thr-AMP and then transferred to the acceptor end of tRNA(Thr). Also edits incorrectly charged L-seryl-tRNA(Thr). This chain is Threonine--tRNA ligase, found in Thermotoga petrophila (strain ATCC BAA-488 / DSM 13995 / JCM 10881 / RKU-1).